The following is a 73-amino-acid chain: DNA-directed RNA polymerase subunit omega (73 aa).

It belongs to the RNA polymerase subunit omega family. In terms of assembly, the RNAP catalytic core consists of 2 alpha, 1 beta, 1 beta' and 1 omega subunit. When a sigma factor is associated with the core the holoenzyme is formed, which can initiate transcription.

It carries out the reaction RNA(n) + a ribonucleoside 5'-triphosphate = RNA(n+1) + diphosphate. Its function is as follows. Promotes RNA polymerase assembly. Latches the N- and C-terminal regions of the beta' subunit thereby facilitating its interaction with the beta and alpha subunits. The protein is DNA-directed RNA polymerase subunit omega of Maridesulfovibrio salexigens (strain ATCC 14822 / DSM 2638 / NCIMB 8403 / VKM B-1763) (Desulfovibrio salexigens).